Reading from the N-terminus, the 140-residue chain is Methylglyoxal synthase (140 aa).

Residues 1–140 enclose the MGS-like domain; the sequence is MKIALIAHDR…HEGDRRPLAF (140 aa). Substrate contacts are provided by residues H8, K12, 34-37, and 54-55; these read TGTT and SG. The active-site Proton donor/acceptor is the D60. H87 contributes to the substrate binding site.

This sequence belongs to the methylglyoxal synthase family.

It catalyses the reaction dihydroxyacetone phosphate = methylglyoxal + phosphate. In terms of biological role, catalyzes the formation of methylglyoxal from dihydroxyacetone phosphate. The polypeptide is Methylglyoxal synthase (Enterococcus faecalis (strain ATCC 700802 / V583)).